We begin with the raw amino-acid sequence, 301 residues long: Glycine--tRNA ligase alpha subunit (301 aa).

This sequence belongs to the class-II aminoacyl-tRNA synthetase family. Tetramer of two alpha and two beta subunits.

It is found in the cytoplasm. The catalysed reaction is tRNA(Gly) + glycine + ATP = glycyl-tRNA(Gly) + AMP + diphosphate. The chain is Glycine--tRNA ligase alpha subunit from Shewanella denitrificans (strain OS217 / ATCC BAA-1090 / DSM 15013).